Here is a 492-residue protein sequence, read N- to C-terminus: 3-octaprenyl-4-hydroxybenzoate carboxy-lyase (492 aa).

Position 172 (N172) interacts with Mn(2+). Prenylated FMN contacts are provided by residues 175–177 (IYR), 189–191 (RWL), and 194–195 (RG). E238 serves as a coordination point for Mn(2+). The active-site Proton donor is the D287.

The protein belongs to the UbiD family. Homohexamer. Prenylated FMN serves as cofactor. Mn(2+) is required as a cofactor.

It is found in the cell membrane. It carries out the reaction a 4-hydroxy-3-(all-trans-polyprenyl)benzoate + H(+) = a 2-(all-trans-polyprenyl)phenol + CO2. Its pathway is cofactor biosynthesis; ubiquinone biosynthesis. Catalyzes the decarboxylation of 3-octaprenyl-4-hydroxy benzoate to 2-octaprenylphenol, an intermediate step in ubiquinone biosynthesis. This Pasteurella multocida (strain Pm70) protein is 3-octaprenyl-4-hydroxybenzoate carboxy-lyase.